The chain runs to 191 residues: tRNA-specific adenosine deaminase 2 (191 aa).

The region spanning 20 to 145 is the CMP/dCMP-type deaminase domain; it reads EETEKWMEEA…SVLNIASADL (126 aa). A Zn(2+)-binding site is contributed by His71. The active-site Proton donor is the Glu73. Zn(2+) is bound by residues Cys107 and Cys110.

It belongs to the cytidine and deoxycytidylate deaminase family. ADAT2 subfamily. Requires Zn(2+) as cofactor.

The catalysed reaction is adenosine(34) in tRNA + H2O + H(+) = inosine(34) in tRNA + NH4(+). Functionally, probably participates in deamination of adenosine-34 to inosine in many tRNAs. This chain is tRNA-specific adenosine deaminase 2 (ADAT2), found in Homo sapiens (Human).